Consider the following 431-residue polypeptide: Leucine carboxyl methyltransferase 1 (431 aa).

Residues Arg103, Gly131, Asp159, and Asp219–Leu220 each bind S-adenosyl-L-methionine. The interval Gln228–Gln268 is disordered. Position 289 (Glu289) interacts with S-adenosyl-L-methionine.

The protein belongs to the methyltransferase superfamily. LCMT family.

It carries out the reaction [phosphatase 2A protein]-C-terminal L-leucine + S-adenosyl-L-methionine = [phosphatase 2A protein]-C-terminal L-leucine methyl ester + S-adenosyl-L-homocysteine. In terms of biological role, methylates the carboxyl group of the C-terminal leucine residue of protein phosphatase 2A catalytic subunits to form alpha-leucine ester residues. The sequence is that of Leucine carboxyl methyltransferase 1 (ppm-1) from Neurospora crassa (strain ATCC 24698 / 74-OR23-1A / CBS 708.71 / DSM 1257 / FGSC 987).